The following is a 332-amino-acid chain: Adenosine deaminase (332 aa).

Zn(2+) contacts are provided by H12 and H14. Substrate-binding residues include H14, D16, and G170. H197 contributes to the Zn(2+) binding site. The Proton donor role is filled by E200. D278 is a Zn(2+) binding site.

This sequence belongs to the metallo-dependent hydrolases superfamily. Adenosine and AMP deaminases family. Adenosine deaminase subfamily. The cofactor is Zn(2+).

The enzyme catalyses adenosine + H2O + H(+) = inosine + NH4(+). It carries out the reaction 2'-deoxyadenosine + H2O + H(+) = 2'-deoxyinosine + NH4(+). Its function is as follows. Catalyzes the hydrolytic deamination of adenosine and 2-deoxyadenosine. The sequence is that of Adenosine deaminase from Clostridium perfringens (strain SM101 / Type A).